A 586-amino-acid chain; its full sequence is Arrestin-related trafficking adapter 5 (586 aa).

Disordered regions lie at residues 123–145 (GENAENQHNSSSGRSTSNQDMDT) and 182–217 (ENGVTGTPFEGLRENARSRSSSSNTLNNNSHSYSNR). Over residues 126-145 (AENQHNSSSGRSTSNQDMDT) the composition is skewed to polar residues. The span at 199–216 (SRSSSSNTLNNNSHSYSN) shows a compositional bias: low complexity. A Glycyl lysine isopeptide (Lys-Gly) (interchain with G-Cter in ubiquitin) cross-link involves residue lysine 364.

The protein belongs to the arrestin family. As to quaternary structure, interacts with RSP5. In terms of processing, ubiquitinated by RSP5.

Functionally, may regulate endocytosis by recruiting RSP5 ubiquitin ligase activity to specific plasma membrane proteins in response to extracellular stimuli. This chain is Arrestin-related trafficking adapter 5 (ART5), found in Saccharomyces cerevisiae (strain ATCC 204508 / S288c) (Baker's yeast).